We begin with the raw amino-acid sequence, 443 residues long: C4-dicarboxylate transport protein (443 aa).

The next 7 membrane-spanning stretches (helical) occupy residues 7–26, 46–63, 76–98, 140–162, 183–205, 218–240, and 350–372; these read SLYV…GALF, MVIA…VAHM, ALIY…MNVL, LVSA…FGFA, VVFV…AMAF, LGYL…LGLI, and FITL…ALIL. The segment at 415–443 is disordered; the sequence is GEDLPTTEPDVASEERGEGREIDSSRPVT. The span at 427–443 shows a compositional bias: basic and acidic residues; sequence SEERGEGREIDSSRPVT.

The protein belongs to the dicarboxylate/amino acid:cation symporter (DAACS) (TC 2.A.23) family.

It localises to the cell membrane. Responsible for the transport of dicarboxylates such as succinate, fumarate, and malate across the membrane. This is C4-dicarboxylate transport protein (dctA) from Deinococcus radiodurans (strain ATCC 13939 / DSM 20539 / JCM 16871 / CCUG 27074 / LMG 4051 / NBRC 15346 / NCIMB 9279 / VKM B-1422 / R1).